The chain runs to 391 residues: UPF0229 protein BCG9842_B4751 (391 aa).

Over residues 1–16 (MGEENQPNYTISQENW) the composition is skewed to polar residues. Disordered stretches follow at residues 1–31 (MGEENQPNYTISQENWSLHRKGYDDQQRHQE) and 80–117 (HVGQGNGDSKVGDVVARDGSGGQKQKGPGKGQGAGDAA). Positions 21-31 (KGYDDQQRHQE) are enriched in basic and acidic residues. The segment covering 98–115 (GSGGQKQKGPGKGQGAGD) has biased composition (gly residues).

The protein belongs to the UPF0229 family.

The chain is UPF0229 protein BCG9842_B4751 from Bacillus cereus (strain G9842).